A 134-amino-acid chain; its full sequence is Postmeiotic segregation increased 2-like protein 5 (134 aa).

The protein belongs to the DNA mismatch repair MutL/HexB family.

This Homo sapiens (Human) protein is Postmeiotic segregation increased 2-like protein 5 (PMS2P5).